A 160-amino-acid chain; its full sequence is uncharacterized protein (160 aa).

The residue at position 49 (Tyr49) is a Phosphotyrosine.

Its function is as follows. May be involved in the assembly, structure, or function of the flagellum. May polymerize to form a filamentous structure that is part of the flagellum. This is an uncharacterized protein from Bacillus subtilis (strain 168).